The chain runs to 195 residues: MKKKVLAIALVTVFTGTGVAQAADVTAQAVATWSATAKKDTTSKLVVTPLGSLAFQYAEGIKGFNSQKGLFDVAIEGDSTATAFKLTSRLITNTLTQLDTSGSTLNVGVDYNGAAVEKTGDTVMIDTANGVLGGNLSPLANGYNASNRTTAQDGFTFSIISGTTNGTTAVTDYSTLPEGIWSGDVSVQFDATWTS.

A signal peptide spans 1-22 (MKKKVLAIALVTVFTGTGVAQA).

The protein belongs to the EcpA/MatB fimbrillin family. In terms of assembly, self-associates. Forms filaments. Interacts with EcpD.

The protein localises to the fimbrium. Its function is as follows. Part of the ecpRABCDE operon, which encodes the E.coli common pilus (ECP). ECP is found in both commensal and pathogenic strains and plays a dual role in early-stage biofilm development and host cell recognition. Major subunit of the fimbria. The chain is Common pilus major fimbrillin subunit EcpA (ecpA) from Escherichia coli O127:H6 (strain E2348/69 / EPEC).